The following is a 157-amino-acid chain: MPDLFAYTDGACSGNPGPGGWGALLRAMDGETVLKERELKGGEKETTNNRMELLAAIHALESLARPSKITVVTDSAYVKNGVTGWIFGWKKNGWKTSAKKPVKNVELWQRLDAAQSRHDVTWEWVKGHAGHPENERADELARAGMAPFKSSGKSSKG.

The RNase H type-1 domain occupies 1–146; it reads MPDLFAYTDG…ADELARAGMA (146 aa). Mg(2+) is bound by residues Asp-9, Glu-52, Asp-74, and Asp-138.

The protein belongs to the RNase H family. As to quaternary structure, monomer. The cofactor is Mg(2+).

The protein localises to the cytoplasm. It catalyses the reaction Endonucleolytic cleavage to 5'-phosphomonoester.. In terms of biological role, endonuclease that specifically degrades the RNA of RNA-DNA hybrids. This chain is Ribonuclease H, found in Ruegeria sp. (strain TM1040) (Silicibacter sp.).